The following is a 1236-amino-acid chain: ATP-dependent helicase/nuclease subunit A (1236 aa).

One can recognise a UvrD-like helicase ATP-binding domain in the interval 2 to 457 (AHWTIEQEEA…VDLNKNFRSH (456 aa)). An ATP-binding site is contributed by 23 to 30 (AAAGSGKT). One can recognise a UvrD-like helicase C-terminal domain in the interval 515–816 (NTAKRVEICI…RIMSIHKSKG (302 aa)).

It belongs to the helicase family. AddA subfamily. In terms of assembly, heterodimer of AddA and AddB/RexB. Mg(2+) is required as a cofactor.

It carries out the reaction Couples ATP hydrolysis with the unwinding of duplex DNA by translocating in the 3'-5' direction.. The enzyme catalyses ATP + H2O = ADP + phosphate + H(+). The heterodimer acts as both an ATP-dependent DNA helicase and an ATP-dependent, dual-direction single-stranded exonuclease. Recognizes the chi site generating a DNA molecule suitable for the initiation of homologous recombination. The AddA nuclease domain is required for chi fragment generation; this subunit has the helicase and 3' -&gt; 5' nuclease activities. This is ATP-dependent helicase/nuclease subunit A from Syntrophomonas wolfei subsp. wolfei (strain DSM 2245B / Goettingen).